We begin with the raw amino-acid sequence, 834 residues long: WW domain-containing adapter protein with coiled-coil homolog (834 aa).

Disordered stretches follow at residues 1–247 (MVMH…WSEH), 268–411 (KPKE…SVAT), and 430–504 (VTGA…GAKG). Over residues 22 to 31 (HTSYQSSKYS) the composition is skewed to low complexity. Residues 33–50 (SKRDYERDRSSNYRDRDL) show a composition bias toward basic and acidic residues. Residues 53-77 (GAGGGGGGGSAGGGGGGSGNGGGPL) are compositionally biased toward gly residues. The segment covering 96-108 (RSHDLRDRSDHRG) has biased composition (basic and acidic residues). Over residues 109-119 (GGGGNGRGGSG) the composition is skewed to gly residues. 3 stretches are compositionally biased toward basic and acidic residues: residues 127 to 168 (KMRD…DRRG), 181 to 246 (SSRE…DWSE), and 268 to 303 (KPKEWVDRERNLPRDQHREKDYRDKDRDRDRDDRFS). The WW domain maps to 244-271 (WSEHVSSSGKMYYYNCKTEISQWEKPKE). 2 stretches are compositionally biased toward polar residues: residues 304–314 (RSTYKHSNSSR) and 350–363 (GDSTPTSEASYSLS). Gly residues predominate over residues 369–384 (HGGGPGGGGPGGGGGS). Low complexity-rich tracts occupy residues 402-411 (TANSSASVAT) and 431-466 (TGATMLPTMSGMLNSNSSNSAGGSSSNASSSSLRNS). Residues 472–496 (GSTSGTTVPTLGSQDPHQHHLNSNA) are compositionally biased toward polar residues.

Expressed in adult head and thorax and in larval central nervous system and fat body.

The protein localises to the nucleus. It is found in the lysosome. Acts as a linker between gene transcription and histone H2B monoubiquitination at 'Lys-118'. Regulates the cell-cycle checkpoint activation in response to DNA damage. Positive regulator of amino acid starvation-induced autophagy. Also acts as a negative regulator of basal autophagy. Positively regulates mTor activity. Promotes, in an energy-dependent manner, the assembly of the TTT complex and the RUVBL complex composed of pont and rept into the TTT-RUVBL complex. This leads to dimerization of the mTORC1 complex and its subsequent activation. May negatively regulate the ubiquitin proteasome pathway. Required for habituation, a form of non-associative learning. The protein is WW domain-containing adapter protein with coiled-coil homolog of Drosophila melanogaster (Fruit fly).